A 182-amino-acid chain; its full sequence is Hypoxanthine/guanine phosphoribosyltransferase (182 aa).

It belongs to the purine/pyrimidine phosphoribosyltransferase family. Archaeal HPRT subfamily. Homodimer.

It is found in the cytoplasm. The catalysed reaction is IMP + diphosphate = hypoxanthine + 5-phospho-alpha-D-ribose 1-diphosphate. It carries out the reaction GMP + diphosphate = guanine + 5-phospho-alpha-D-ribose 1-diphosphate. It functions in the pathway purine metabolism; IMP biosynthesis via salvage pathway; IMP from hypoxanthine: step 1/1. Its function is as follows. Catalyzes a salvage reaction resulting in the formation of IMP that is energically less costly than de novo synthesis. This chain is Hypoxanthine/guanine phosphoribosyltransferase, found in Methanospirillum hungatei JF-1 (strain ATCC 27890 / DSM 864 / NBRC 100397 / JF-1).